The chain runs to 303 residues: Mitochondrial substrate carrier family protein E (303 aa).

At 1–8 (MENKKESS) the chain is on the mitochondrial intermembrane side. 3 Solcar repeats span residues 6-93 (ESSL…SKQW), 104-197 (ESTI…CKST), and 210-298 (LPIP…LKYL). Residues 9–29 (LLYILTGATSGLLADSIMHPV) form a helical membrane-spanning segment. Over 30–67 (DTVRARVQIEKVGKSQYKGTFNALNQIIKNEGVSYLYK) the chain is Mitochondrial matrix. Residues 68 to 88 (GFPIVATATVPAHALYFLGYE) form a helical membrane-spanning segment. The Mitochondrial intermembrane portion of the chain corresponds to 89 to 109 (YSKQWVTDRYGKKWGESTITH). The chain crosses the membrane as a helical span at residues 110 to 130 (FSAGFVADALGSLIWVPMDII). The Mitochondrial matrix portion of the chain corresponds to 131-171 (KQRLQVQTNTQKLNPNQTYYKGSFHAGKIILQEEGIRGLYR). A helical transmembrane segment spans residues 172–192 (GFMPALATYGPFVGIYFSVYE). Residues 193 to 215 (KCKSTISSLLSKEKDQYLPIPYQ) are Mitochondrial intermembrane-facing. A helical transmembrane segment spans residues 216 to 236 (LGSGFFAGAFAAAVTCPLDVI). At 237–268 (KTRIQVQRSTEKQIYKGMWDSFKTILKEEGPK) the chain is on the mitochondrial matrix side. A helical membrane pass occupies residues 269 to 289 (AFVKGMGARIWWIAPGNALTI). Residues 290–303 (ASYEQLKYLFKDLI) lie on the Mitochondrial intermembrane side of the membrane.

Belongs to the mitochondrial carrier (TC 2.A.29) family.

The protein localises to the mitochondrion inner membrane. In terms of biological role, mitochondrial solute carriers shuttle metabolites, nucleotides, and cofactors through the mitochondrial inner membrane. The sequence is that of Mitochondrial substrate carrier family protein E (mcfE) from Dictyostelium discoideum (Social amoeba).